We begin with the raw amino-acid sequence, 438 residues long: Glutaryl-CoA dehydrogenase, mitochondrial (438 aa).

The N-terminal 44 residues, methionine 1–serine 44, are a transit peptide targeting the mitochondrion. Residues arginine 138–serine 139 and serine 186 each bind substrate. FAD contacts are provided by residues phenylalanine 177–serine 186, serine 186, and tryptophan 212–threonine 214. Residue lysine 240 is modified to N6-acetyllysine. Phenylalanine 287–arginine 294 is a substrate binding site. FAD-binding positions include arginine 319, glutamine 330, and aspartate 387–glycine 391. The active-site Proton acceptor is glutamate 414. Substrate is bound at residue glycine 415. Residues threonine 416, threonine 416–aspartate 418, and phenylalanine 434 contribute to the FAD site.

It belongs to the acyl-CoA dehydrogenase family. In terms of assembly, homotetramer. Requires FAD as cofactor.

It localises to the mitochondrion matrix. The catalysed reaction is glutaryl-CoA + oxidized [electron-transfer flavoprotein] + 2 H(+) = (2E)-butenoyl-CoA + reduced [electron-transfer flavoprotein] + CO2. The protein operates within amino-acid metabolism; lysine degradation. It functions in the pathway amino-acid metabolism; tryptophan metabolism. Its function is as follows. Catalyzes the oxidative decarboxylation of glutaryl-CoA to crotonyl-CoA and CO(2) in the degradative pathway of L-lysine, L-hydroxylysine, and L-tryptophan metabolism. It uses electron transfer flavoprotein as its electron acceptor. The sequence is that of Glutaryl-CoA dehydrogenase, mitochondrial (GCDH) from Bos taurus (Bovine).